The primary structure comprises 366 residues: Histidinol-phosphate aminotransferase (366 aa).

Position 228 is an N6-(pyridoxal phosphate)lysine (K228).

The protein belongs to the class-II pyridoxal-phosphate-dependent aminotransferase family. Histidinol-phosphate aminotransferase subfamily. As to quaternary structure, homodimer. Pyridoxal 5'-phosphate is required as a cofactor.

It carries out the reaction L-histidinol phosphate + 2-oxoglutarate = 3-(imidazol-4-yl)-2-oxopropyl phosphate + L-glutamate. It functions in the pathway amino-acid biosynthesis; L-histidine biosynthesis; L-histidine from 5-phospho-alpha-D-ribose 1-diphosphate: step 7/9. This is Histidinol-phosphate aminotransferase from Corynebacterium glutamicum (strain R).